The primary structure comprises 227 residues: Probable cell wall protein PGA42 (227 aa).

The N-terminal stretch at 1 to 16 (MKFIILLFALIHITVA) is a signal peptide. Residue N192 is glycosylated (N-linked (GlcNAc...) asparagine). A lipid anchor (GPI-anchor amidated serine) is attached at S200. Residues 201–227 (GSQIFVLCVISVVGFIFFFLFFLSLFV) constitute a propeptide, removed in mature form.

The protein belongs to the IHD1 family. The GPI-anchor is attached to the protein in the endoplasmic reticulum and serves to target the protein to the cell surface. There, the glucosamine-inositol phospholipid moiety is cleaved off and the GPI-modified mannoprotein is covalently attached via its lipidless GPI glycan remnant to the 1,6-beta-glucan of the outer cell wall layer.

The protein resides in the secreted. It is found in the cell wall. Its subcellular location is the membrane. In terms of biological role, probable GPI-anchored cell wall protein that may be involved in cell wall organization, hyphal growth, as well as in virulence. The chain is Probable cell wall protein PGA42 (PGA42) from Candida albicans (strain SC5314 / ATCC MYA-2876) (Yeast).